The sequence spans 374 residues: Proteasomal ubiquitin receptor ADRM1 homolog (374 aa).

One can recognise a Pru domain in the interval serine 13–proline 131. Disordered stretches follow at residues aspartate 126–proline 166, serine 187–serine 223, and alanine 334–aspartate 374. Composition is skewed to polar residues over residues serine 141–methionine 163 and proline 209–serine 223. One can recognise a DEUBAD domain in the interval serine 239–alanine 346. A compositionally biased stretch (basic and acidic residues) spans aspartate 354 to asparagine 368.

Belongs to the ADRM1 family. In terms of assembly, component of the 19S proteasome regulatory particle complex. The 26S proteasome consists of a 20S core particle (CP) and two 19S regulatory subunits (RP). Interacts with deubiquitinase ubh-4.

The protein localises to the cytoplasm. It is found in the nucleus. May function as a proteasomal ubiquitin receptor. May promote the deubiquitinating activity associated with the 26S proteasome. The sequence is that of Proteasomal ubiquitin receptor ADRM1 homolog from Caenorhabditis elegans.